We begin with the raw amino-acid sequence, 506 residues long: Sucrose transport protein SUT3 (506 aa).

At 1–20 the chain is on the cytoplasmic side; the sequence is MAVDMELDGGGDGKGKAPPQ. The chain crosses the membrane as a helical span at residues 21–41; it reads ISLSGLFLACMVAGGVQYGWA. The Extracellular portion of the chain corresponds to 42–54; that stretch reads LQLSLLTPYVQTL. Residues 55–75 traverse the membrane as a helical segment; it reads GIPHALTSVMWLCGPIAGLIV. The Cytoplasmic portion of the chain corresponds to 76–94; sequence QPCVGLYSDKCTSSLGRRR. A helical transmembrane segment spans residues 95 to 115; that stretch reads PFILTGCIIICISVIVIGFSS. The Extracellular portion of the chain corresponds to 116 to 135; that stretch reads DIGYALGDTTEDCKVYRGPR. A helical membrane pass occupies residues 136 to 156; it reads YHAAAAFILGFWLLDFSNNTV. The Cytoplasmic portion of the chain corresponds to 157–171; the sequence is QGPARALMADLSGRH. The chain crosses the membrane as a helical span at residues 172–192; the sequence is GPSAANAIFCSWMALGNILGY. At 193–220 the chain is on the extracellular side; sequence SSGSTNDWHKWFPFLMTRACCEACANLK. The chain crosses the membrane as a helical span at residues 221–241; the sequence is AAFLVAVVFLGLSTAVTMVFA. The Cytoplasmic segment spans residues 242–275; that stretch reads REVALDPVAAAKRNEGEASGLLAVFKGMKNLPVG. Residues 276 to 296 form a helical membrane-spanning segment; the sequence is MPSVLIVTGLTWLSWFPFILF. The Extracellular segment spans residues 297–327; it reads DTDWMGREIYHGRPDGSPAEVTAFQEGVRQG. Residues 328–348 traverse the membrane as a helical segment; the sequence is AFGLLLNSIVLGISSFLIEPM. Residues 349–355 lie on the Cytoplasmic side of the membrane; it reads CRRLGAR. Residues 356–376 traverse the membrane as a helical segment; sequence AVWVMSSAVVCVAMAAVSVLS. At 377-404 the chain is on the extracellular side; the sequence is AWSLGDFGGSVQDAARAPAEEGGVRASA. Residues 405–425 form a helical membrane-spanning segment; it reads LALFVFLGLPFAVLCSVPFAV. The Cytoplasmic segment spans residues 426–441; that stretch reads TAQLAASRGGGQGLCT. A helical transmembrane segment spans residues 442 to 462; sequence GVLNISIVVPQMAIALGAGPW. Over 463–470 the chain is Extracellular; it reads DELFGEGN. The helical transmembrane segment at 471 to 491 threads the bilayer; the sequence is IPAFAMASVFAAAAAAAGVVL. Residues 492 to 506 are Cytoplasmic-facing; it reads LPKVSVRSVSMAGGH.

It belongs to the glycoside-pentoside-hexuronide (GPH) cation symporter transporter (TC 2.A.2.4) family. In terms of assembly, homodimer. As to expression, widely expressed. Highest expression in sink leaves and lowest in germinating seeds.

It is found in the cell membrane. Its pathway is glycan biosynthesis; sucrose metabolism. Responsible for the transport of sucrose into the cell, with the concomitant uptake of protons (symport system). May also transport other glucosides. This is Sucrose transport protein SUT3 (SUT3) from Oryza sativa subsp. japonica (Rice).